The chain runs to 362 residues: Heat-inducible transcription repressor HrcA (362 aa).

Belongs to the HrcA family.

Functionally, negative regulator of class I heat shock genes (grpE-dnaK-dnaJ and groELS operons). Prevents heat-shock induction of these operons. The chain is Heat-inducible transcription repressor HrcA from Rhizobium etli (strain CIAT 652).